The primary structure comprises 138 residues: NADPH-dependent 7-cyano-7-deazaguanine reductase (138 aa).

Cysteine 53 serves as the catalytic Thioimide intermediate. Aspartate 60 (proton donor) is an active-site residue. Substrate is bound by residues 75 to 77 (VEL) and 94 to 95 (HE).

The protein belongs to the GTP cyclohydrolase I family. QueF type 1 subfamily.

The protein resides in the cytoplasm. The catalysed reaction is 7-aminomethyl-7-carbaguanine + 2 NADP(+) = 7-cyano-7-deazaguanine + 2 NADPH + 3 H(+). It participates in tRNA modification; tRNA-queuosine biosynthesis. Catalyzes the NADPH-dependent reduction of 7-cyano-7-deazaguanine (preQ0) to 7-aminomethyl-7-deazaguanine (preQ1). The polypeptide is NADPH-dependent 7-cyano-7-deazaguanine reductase (Gloeothece citriformis (strain PCC 7424) (Cyanothece sp. (strain PCC 7424))).